Consider the following 800-residue polypeptide: Serine/threonine-protein kinase KIN4 (800 aa).

In terms of domain architecture, Protein kinase spans tyrosine 46–leucine 313. ATP is bound by residues leucine 52–valine 60 and lysine 80. Aspartate 175 functions as the Proton acceptor in the catalytic mechanism. Disordered regions lie at residues leucine 331–valine 397 and serine 438–threonine 487. Residues serine 348 to serine 358 show a composition bias toward low complexity. Phosphoserine occurs at positions 365 and 388. Composition is skewed to polar residues over residues glutamine 380–serine 395 and glycine 459–lysine 473. Residue serine 521 is modified to Phosphoserine. 2 disordered regions span residues glutamate 629–serine 661 and serine 678–serine 754. Residues serine 678 to asparagine 721 show a composition bias toward polar residues. Residues proline 727–aspartate 740 are compositionally biased toward basic and acidic residues. Residue serine 748 is modified to Phosphoserine.

It belongs to the protein kinase superfamily. Ser/Thr protein kinase family.

It catalyses the reaction L-seryl-[protein] + ATP = O-phospho-L-seryl-[protein] + ADP + H(+). The catalysed reaction is L-threonyl-[protein] + ATP = O-phospho-L-threonyl-[protein] + ADP + H(+). Functionally, this protein is probably a serine/threonine protein kinase. The protein is Serine/threonine-protein kinase KIN4 (KIN4) of Saccharomyces cerevisiae (strain ATCC 204508 / S288c) (Baker's yeast).